A 194-amino-acid chain; its full sequence is Acid tolerance regulatory protein ActR (194 aa).

A Response regulatory domain is found at 24-138 (SLLIVDDDTA…DILAALIQRP (115 aa)). D73 carries the post-translational modification 4-aspartylphosphate.

Post-translationally, phosphorylated by ActS.

In terms of biological role, member of the two-component regulatory system ActS/ActR acting in acid tolerance. These data implicate that a two-component sensor may be involved in pH sensing and/or response. This chain is Acid tolerance regulatory protein ActR (actR), found in Sinorhizobium medicae (strain WSM419) (Ensifer medicae).